Here is a 245-residue protein sequence, read N- to C-terminus: tRNA pseudouridine synthase A (245 aa).

The active-site Nucleophile is aspartate 52. Substrate is bound at residue tyrosine 111.

The protein belongs to the tRNA pseudouridine synthase TruA family. In terms of assembly, homodimer.

The catalysed reaction is uridine(38/39/40) in tRNA = pseudouridine(38/39/40) in tRNA. Functionally, formation of pseudouridine at positions 38, 39 and 40 in the anticodon stem and loop of transfer RNAs. The protein is tRNA pseudouridine synthase A of Nitrobacter hamburgensis (strain DSM 10229 / NCIMB 13809 / X14).